We begin with the raw amino-acid sequence, 591 residues long: Aspartate--tRNA(Asp/Asn) ligase (591 aa).

Glutamate 175 provides a ligand contact to L-aspartate. Positions 199 to 202 (QQFK) are aspartate. L-aspartate contacts are provided by arginine 221 and histidine 453. 221-223 (RDE) lines the ATP pocket. Glutamate 486 contributes to the ATP binding site. Arginine 493 serves as a coordination point for L-aspartate. 538-541 (GIDR) lines the ATP pocket.

Belongs to the class-II aminoacyl-tRNA synthetase family. Type 1 subfamily. In terms of assembly, homodimer.

The protein resides in the cytoplasm. The enzyme catalyses tRNA(Asx) + L-aspartate + ATP = L-aspartyl-tRNA(Asx) + AMP + diphosphate. In terms of biological role, aspartyl-tRNA synthetase with relaxed tRNA specificity since it is able to aspartylate not only its cognate tRNA(Asp) but also tRNA(Asn). Reaction proceeds in two steps: L-aspartate is first activated by ATP to form Asp-AMP and then transferred to the acceptor end of tRNA(Asp/Asn). In Cereibacter sphaeroides (strain ATCC 17025 / ATH 2.4.3) (Rhodobacter sphaeroides), this protein is Aspartate--tRNA(Asp/Asn) ligase.